Consider the following 617-residue polypeptide: Dihydroxy-acid dehydratase (617 aa).

Residue Asp81 participates in Mg(2+) binding. Cys122 is a [2Fe-2S] cluster binding site. The Mg(2+) site is built by Asp123 and Lys124. The residue at position 124 (Lys124) is an N6-carboxylysine. Cys197 lines the [2Fe-2S] cluster pocket. Residue Glu494 coordinates Mg(2+). Ser520 functions as the Proton acceptor in the catalytic mechanism.

This sequence belongs to the IlvD/Edd family. As to quaternary structure, homodimer. [2Fe-2S] cluster serves as cofactor. Requires Mg(2+) as cofactor.

The catalysed reaction is (2R)-2,3-dihydroxy-3-methylbutanoate = 3-methyl-2-oxobutanoate + H2O. The enzyme catalyses (2R,3R)-2,3-dihydroxy-3-methylpentanoate = (S)-3-methyl-2-oxopentanoate + H2O. It participates in amino-acid biosynthesis; L-isoleucine biosynthesis; L-isoleucine from 2-oxobutanoate: step 3/4. Its pathway is amino-acid biosynthesis; L-valine biosynthesis; L-valine from pyruvate: step 3/4. Functions in the biosynthesis of branched-chain amino acids. Catalyzes the dehydration of (2R,3R)-2,3-dihydroxy-3-methylpentanoate (2,3-dihydroxy-3-methylvalerate) into 2-oxo-3-methylpentanoate (2-oxo-3-methylvalerate) and of (2R)-2,3-dihydroxy-3-methylbutanoate (2,3-dihydroxyisovalerate) into 2-oxo-3-methylbutanoate (2-oxoisovalerate), the penultimate precursor to L-isoleucine and L-valine, respectively. The protein is Dihydroxy-acid dehydratase of Parafrankia sp. (strain EAN1pec).